The following is a 790-amino-acid chain: F-box and leucine-rich repeat protein 13 (790 aa).

The 47-residue stretch at 237-283 (AFDISVLPEQAILQIFLYLTFKDMMACSRVNRSWMAMIQRGSLWNSI) folds into the F-box domain. LRR repeat units follow at residues 503-525 (QLTVLNLTNCIRIGDIGLKHFFD), 531-552 (RLRELNLTNCSLLGDSSVIRLS), 557-579 (NLHYLNLRNCEHLTDLAIEYIAS), 582-602 (SLISVDLSGTLISNEGMTILS), 606-628 (KLREVSVSDCVNITDFGIRAYCK), and 632-657 (LLEHLDVSYCSQLTDDIIKTIAIFCT).

Belongs to the DRC6 family. In terms of assembly, component of the nexin-dynein regulatory complex (N-DRC). Directly interacts with SKP1 and CUL1. Interacts with TCTE1/DRC5.

The protein resides in the cytoplasm. It localises to the cytoskeleton. It is found in the flagellum axoneme. Its subcellular location is the microtubule organizing center. The protein localises to the centrosome. Substrate-recognition component of the SCF (SKP1-CUL1-F-box protein)-type E3 ubiquitin ligase complex. Component of the nexin-dynein regulatory complex (N-DRC), a key regulator of ciliary/flagellar motility which maintains the alignment and integrity of the distal axoneme and regulates microtubule sliding in motile axonemes. Specifically targets CEP192 isoform 3 for ubiquitin-mediated proteolysis and thereby acts as a regulator of microtubule nucleation activity. The sequence is that of F-box and leucine-rich repeat protein 13 (Fbxl13) from Mus musculus (Mouse).